Reading from the N-terminus, the 687-residue chain is MDSITNKRSLFESSHFWILLSLIAFIALPSKALDYGLLESTADEFLDAMGWSSVNLTILWFLPLIGFWLLPSLKLSTETQAKVELGLISFILLFAFISATIYKVSMGYSVIVLIATLTALATFAFAKLKMMQGDKFIIGALLSIILLIFFFIVYPTVAIFISMFYDGETFAPEQVVRILGQGYIVRVISNSLFLSGFVGIVSTVFGLAFALYTTRIAHRTAFIGKIFSILPIVTPPFVVGLGVTLMLGRSGYVTEFLDTYFGFKDHNWLYGFNGIAIAQILAFAPISFMILDGALKSIHPSIEEASYTLRANRYQTFYNIIFPLLRPALANSFLIVFIQSLADFSNPLVLGGSFDVIATQIYFYIAGSQLDYASASTLGSMLLIFSLLIFIVQYMWIGNRSYVTVSGKSYRGDVQDLPSGLKYTIIVMLGFWVVFNFALYGSIFYGSFTVNWGVDYTLTLNNYAMLFGQGLSDGAWPSLINTMIYAGIAAPLTALFGLLIAYIVVRKDFQGKKTLEFLTMLCFAVPGTVAGVSYILAFNDAPMYITGTGIIIIISMVMRDLPIGMRAAIAGLGQLDKSLDEASLSLKGSSLKTIWFIVFPLLKPALLSALVTSFVRAMTTVSAIVFLVTADTRVATAYILNRVEDGEYGVAIAYGSILIVVMMAIILFFDWIVGDTRIPKSQAKKAD.

Helical transmembrane passes span 10-30 (LFESSHFWILLSLIAFIALPS), 50-70 (GWSSVNLTILWFLPLIGFWLL), 85-105 (LGLISFILLFAFISATIYKVS), 106-126 (MGYSVIVLIATLTALATFAFA), 141-161 (LLSIILLIFFFIVYPTVAIFI), 192-212 (LFLSGFVGIVSTVFGLAFALY), 226-246 (IFSILPIVTPPFVVGLGVTLM), 271-291 (GFNGIAIAQILAFAPISFMIL), 318-338 (YNIIFPLLRPALANSFLIVFI), 347-367 (PLVLGGSFDVIATQIYFYIAG), 378-398 (LGSMLLIFSLLIFIVQYMWIG), 425-445 (IIVMLGFWVVFNFALYGSIFY), 450-472 (VNWGVDYTLTLNNYAMLFGQGLS), 484-504 (IYAGIAAPLTALFGLLIAYIV), 517-537 (FLTMLCFAVPGTVAGVSYILA), 538-558 (FNDAPMYITGTGIIIIISMVM), 594-614 (IWFIVFPLLKPALLSALVTSF), 620-640 (TVSAIVFLVTADTRVATAYIL), and 649-669 (GVAIAYGSILIVVMMAIILFF). The ABC transmembrane type-1 1 domain maps to 188 to 393 (ISNSLFLSGF…IFSLLIFIVQ (206 aa)). The region spanning 479–669 (LINTMIYAGI…VVMMAIILFF (191 aa)) is the ABC transmembrane type-1 2 domain.

Belongs to the binding-protein-dependent transport system permease family. FbpB subfamily. The complex is composed of two ATP-binding proteins (FbpC), two transmembrane proteins (FbpB) and a solute-binding protein (FbpA).

The protein resides in the cell inner membrane. Functionally, part of the ABC transporter complex FbpABC (TC 3.A.1.10.1) involved in Fe(3+) ions import. Probably responsible for the translocation of the substrate across the membrane. This chain is Ferric transport system permease protein FbpB (fbpB), found in Actinobacillus pleuropneumoniae (Haemophilus pleuropneumoniae).